A 1216-amino-acid polypeptide reads, in one-letter code: FK506-binding protein 15 (1216 aa).

N-acetylmethionine is present on M1. Phosphoserine is present on residues S14 and S23. Residues 41–68 form a disordered region; sequence YTAPKQPKKGQGTAAGNQTAPKPAPATT. The span at 59–68 shows a compositional bias: low complexity; that stretch reads TAPKPAPATT. The segment at 71-168 is important for function in growth cone organization; it reads SSVLFATAVH…AVSFNKQVCV (98 aa). K91 bears the N6-acetyllysine mark. Residues 196–289 form the PPIase FKBP-type domain; that stretch reads GDSLEVAYTG…VFEVEVRRVK (94 aa). The disordered stretch occupies residues 292–357; that stretch reads RDSGSDGHSV…QLTVNSNPDT (66 aa). Residues 303–322 are compositionally biased toward low complexity; that stretch reads SRDSAAPSPIPASDSLSADP. S306, S310, S342, S344, and S617 each carry phosphoserine. Over residues 340-356 the composition is skewed to polar residues; the sequence is SKSNSLSEQLTVNSNPD. 2 coiled-coil regions span residues 519–790 and 820–865; these read MAVN…AAAE and QQYR…RLEK. The interval 927-1216 is disordered; the sequence is HQEEEEEEEE…DDDDDIGWLG (290 aa). Residues 929 to 940 are compositionally biased toward acidic residues; the sequence is EEEEEEEEEEEE. S948 bears the Phosphoserine mark. Positions 954-964 are enriched in pro residues; it reads PATPGMPPAPP. Residues 983 to 994 show a composition bias toward low complexity; it reads TTPLPLQALPTP. The residue at position 1018 (S1018) is a Phosphoserine. Positions 1036–1045 are enriched in pro residues; sequence TSIPPKPPGP. A phosphoserine mark is found at S1050 and S1091. T1093 is subject to Phosphothreonine. S1108, S1153, S1157, S1159, and S1190 each carry phosphoserine. Phosphothreonine is present on T1198. Acidic residues predominate over residues 1202-1216; the sequence is GDDDDDDDDDIGWLG.

It belongs to the FKBP-type PPIase family. As to quaternary structure, interacts with WIP and actin. Interacts with TBC1D23. Expressed in brain, with highest levels in the granular cell layer of cerebellum and in the granule cell layer of dentate gyrus.

The protein resides in the cytoplasm. Its subcellular location is the cell projection. The protein localises to the axon. It localises to the early endosome. Its function is as follows. Involved in the transport of early endosomes at the level of transition between microfilament-based and microtubule-based movement. May be involved in the cytoskeletal organization of neuronal growth cones. Seems to be inactive as a PPIase. The polypeptide is FK506-binding protein 15 (Fkbp15) (Mus musculus (Mouse)).